A 71-amino-acid chain; its full sequence is Translation initiation factor IF-1 (71 aa).

The S1-like domain occupies 1 to 71 (MSKQEMLSFS…LTKGRITFRG (71 aa)).

The protein belongs to the IF-1 family. As to quaternary structure, component of the 30S ribosomal translation pre-initiation complex which assembles on the 30S ribosome in the order IF-2 and IF-3, IF-1 and N-formylmethionyl-tRNA(fMet); mRNA recruitment can occur at any time during PIC assembly.

It is found in the cytoplasm. In terms of biological role, one of the essential components for the initiation of protein synthesis. Stabilizes the binding of IF-2 and IF-3 on the 30S subunit to which N-formylmethionyl-tRNA(fMet) subsequently binds. Helps modulate mRNA selection, yielding the 30S pre-initiation complex (PIC). Upon addition of the 50S ribosomal subunit IF-1, IF-2 and IF-3 are released leaving the mature 70S translation initiation complex. The polypeptide is Translation initiation factor IF-1 (Pelagibacter ubique (strain HTCC1062)).